The following is a 37-amino-acid chain: Large ribosomal subunit protein bL36c (37 aa).

The protein belongs to the bacterial ribosomal protein bL36 family.

The protein resides in the plastid. It is found in the chloroplast. The chain is Large ribosomal subunit protein bL36c from Pinus koraiensis (Korean pine).